Consider the following 457-residue polypeptide: Argininosuccinate lyase (457 aa).

This sequence belongs to the lyase 1 family. Argininosuccinate lyase subfamily.

The protein resides in the cytoplasm. The catalysed reaction is 2-(N(omega)-L-arginino)succinate = fumarate + L-arginine. It participates in amino-acid biosynthesis; L-arginine biosynthesis; L-arginine from L-ornithine and carbamoyl phosphate: step 3/3. The protein is Argininosuccinate lyase of Erwinia tasmaniensis (strain DSM 17950 / CFBP 7177 / CIP 109463 / NCPPB 4357 / Et1/99).